The sequence spans 75 residues: Phytosulfokines 3 (75 aa).

Positions 1-22 (MSPKVIAICLVALLLPISISHG) are cleaved as a signal peptide. Positions 23 to 66 (GRIGPIEPSKASSKVVERGNYDGRVEGCEEDDCLVERLLVAHLD) are excised as a propeptide. Sulfotyrosine occurs at positions 67 and 69. The propeptide occupies 72–75 (GKHN).

The protein belongs to the phytosulfokine family. Sulfation is important for activity and for the binding to a putative membrane receptor. Post-translationally, PSK-alpha is produced by endopeptidase digestion. PSK-beta is produced from PSK-alpha by exopeptidase digestion.

It localises to the secreted. Promotes plant cell differentiation, organogenesis and somatic embryogenesis as well as cell proliferation. The protein is Phytosulfokines 3 (PSK3) of Oryza sativa subsp. japonica (Rice).